We begin with the raw amino-acid sequence, 255 residues long: MAVTVGVICAIPQELAYLRGVLVDAKRQQVAQILFDSGQLDAHRVVLAAAGMGKVNTGLTATLLADRFGCRTIVFTGVAGGLDPELCIGDIVIADRVVQHDFGLLTDERLRPYQPGHIPFIEPTERLGYPVDPAVIDRVKHRLDGFTLAPLSTAAGGGGRQPRIYYGTILTGDQYLHCERTRNRLHHELGGMAVEMEGGAVAQICASFDIPWLVIRALSDLAGADSGVDFNRFVGEVAASSARVLLRLLPVLTAC.

Residue glutamate 14 is the Proton acceptor of the active site. Residues glycine 80, leucine 176, and 196 to 197 (ME) contribute to the substrate site. Aspartate 220 acts as the Proton donor in catalysis.

Belongs to the PNP/UDP phosphorylase family. MtnN subfamily.

The catalysed reaction is S-adenosyl-L-homocysteine + H2O = S-(5-deoxy-D-ribos-5-yl)-L-homocysteine + adenine. The enzyme catalyses S-methyl-5'-thioadenosine + H2O = 5-(methylsulfanyl)-D-ribose + adenine. It catalyses the reaction 5'-deoxyadenosine + H2O = 5-deoxy-D-ribose + adenine. Its pathway is amino-acid biosynthesis; L-methionine biosynthesis via salvage pathway; S-methyl-5-thio-alpha-D-ribose 1-phosphate from S-methyl-5'-thioadenosine (hydrolase route): step 1/2. Catalyzes the irreversible cleavage of the glycosidic bond in both 5'-methylthioadenosine (MTA) and S-adenosylhomocysteine (SAH/AdoHcy) to adenine and the corresponding thioribose, 5'-methylthioribose and S-ribosylhomocysteine, respectively. Also cleaves 5'-deoxyadenosine, a toxic by-product of radical S-adenosylmethionine (SAM) enzymes, into 5-deoxyribose and adenine. In Mycobacterium bovis (strain ATCC BAA-935 / AF2122/97), this protein is 5'-methylthioadenosine/S-adenosylhomocysteine nucleosidase (mtnN).